The chain runs to 614 residues: Sodium- and chloride-dependent betaine transporter (614 aa).

Positions 1 to 33 (MDRKVAVPEDGPPVVSWLPEEGEKLDQEGEDQV) are disordered. At 1 to 44 (MDRKVAVPEDGPPVVSWLPEEGEKLDQEGEDQVKDRGQWTNKME) the chain is on the cytoplasmic side. A compositionally biased stretch (basic and acidic residues) spans 21–33 (EGEKLDQEGEDQV). The next 3 helical transmembrane spans lie at 45–65 (FVLS…FPYL), 73–92 (AFFI…VFFL), and 117–137 (GIGL…IIIL). The Extracellular portion of the chain corresponds to 138–210 (AWALFYLFSS…SGIHDLGALR (73 aa)). Cysteines 157 and 166 form a disulfide. N-linked (GlcNAc...) asparagine glycans are attached at residues Asn171 and Asn183. 9 consecutive transmembrane segments (helical) span residues 211 to 229 (WELA…FCIW), 238 to 255 (VVYF…ILLI), 291 to 308 (IFFS…LGSY), 320 to 341 (IALC…FSIL), 374 to 393 (MPLS…FLGL), 423 to 441 (LLIL…FLVT), 458 to 478 (GICL…VYGA), 499 to 518 (ISWL…FSLS), and 538 to 556 (IGWF…FVII). At 557 to 614 (TLLKTRGSFKKRLRQLTTPDPSLPQPKQHLYLDGGTSQDCGPSPTKEGLIVGEKETHL) the chain is on the cytoplasmic side. A disordered region spans residues 591-614 (GTSQDCGPSPTKEGLIVGEKETHL).

It belongs to the sodium:neurotransmitter symporter (SNF) (TC 2.A.22) family. SLC6A12 subfamily. In terms of assembly, interacts with LIN7C. As to expression, kidney.

The protein resides in the basolateral cell membrane. It localises to the cell membrane. The catalysed reaction is 4-aminobutanoate(out) + chloride(out) + 3 Na(+)(out) = 4-aminobutanoate(in) + chloride(in) + 3 Na(+)(in). It carries out the reaction glycine betaine(out) + 2 chloride(out) + 3 Na(+)(out) = glycine betaine(in) + 2 chloride(in) + 3 Na(+)(in). Its function is as follows. Transporter that mediates cellular uptake of betaine and GABA in a sodium- and chloride-dependent process. May have a role in regulation of GABAergic transmission in the brain through the reuptake of GABA into presynaptic terminals, as well as in osmotic regulation. Probably also involved in renal and hepatic osmotic regulation. The sequence is that of Sodium- and chloride-dependent betaine transporter (SLC6A12) from Canis lupus familiaris (Dog).